Consider the following 654-residue polypeptide: Beta-galactosidase-1-like protein (654 aa).

The N-terminal stretch at 1-27 (MAPKKPSCLRSLLLPLSLTLLLPQADT) is a signal peptide. Asparagine 97 carries N-linked (GlcNAc...) asparagine glycosylation. Catalysis depends on glutamate 186, which acts as the Proton donor. N-linked (GlcNAc...) asparagine glycosylation occurs at asparagine 243. Catalysis depends on glutamate 264, which acts as the Nucleophile.

Belongs to the glycosyl hydrolase 35 family.

The protein resides in the secreted. Probable glycosyl hydrolase. This chain is Beta-galactosidase-1-like protein (GLB1L), found in Macaca fascicularis (Crab-eating macaque).